The chain runs to 175 residues: Epididymal-specific lipocalin-8 (175 aa).

A signal peptide spans 1 to 25; sequence MPGAAEALPTVTVTLVAGAVPPASG. N-linked (GlcNAc...) asparagine glycosylation is found at asparagine 66 and asparagine 74. A disulfide bridge connects residues cysteine 79 and cysteine 166.

The protein belongs to the calycin superfamily. Lipocalin family.

It localises to the secreted. In terms of biological role, may play a role in male fertility. May act as a retinoid carrier protein within the epididymis. The protein is Epididymal-specific lipocalin-8 (LCN8) of Homo sapiens (Human).